The chain runs to 468 residues: Bifunctional protein GlmU (468 aa).

Positions 1 to 233 (MAQAGSASPL…LEEANLVNDR (233 aa)) are pyrophosphorylase. UDP-N-acetyl-alpha-D-glucosamine-binding positions include 15–18 (LAAG), lysine 29, glutamine 79, and 84–85 (GT). Aspartate 109 contributes to the Mg(2+) binding site. Residues glycine 146, glutamate 159, asparagine 174, and asparagine 231 each contribute to the UDP-N-acetyl-alpha-D-glucosamine site. Asparagine 231 serves as a coordination point for Mg(2+). Residues 234–254 (SQLARAEEILRRRILDAHMKE) are linker. An N-acetyltransferase region spans residues 255–468 (GVTVRDPVST…GDRRRARTEG (214 aa)). UDP-N-acetyl-alpha-D-glucosamine is bound by residues arginine 336 and lysine 354. The active-site Proton acceptor is the histidine 366. UDP-N-acetyl-alpha-D-glucosamine-binding residues include tyrosine 369 and asparagine 380. Acetyl-CoA contacts are provided by residues alanine 383, 389–390 (NY), and alanine 426.

In the N-terminal section; belongs to the N-acetylglucosamine-1-phosphate uridyltransferase family. This sequence in the C-terminal section; belongs to the transferase hexapeptide repeat family. In terms of assembly, homotrimer. It depends on Mg(2+) as a cofactor.

It localises to the cytoplasm. It carries out the reaction alpha-D-glucosamine 1-phosphate + acetyl-CoA = N-acetyl-alpha-D-glucosamine 1-phosphate + CoA + H(+). The catalysed reaction is N-acetyl-alpha-D-glucosamine 1-phosphate + UTP + H(+) = UDP-N-acetyl-alpha-D-glucosamine + diphosphate. The protein operates within nucleotide-sugar biosynthesis; UDP-N-acetyl-alpha-D-glucosamine biosynthesis; N-acetyl-alpha-D-glucosamine 1-phosphate from alpha-D-glucosamine 6-phosphate (route II): step 2/2. Its pathway is nucleotide-sugar biosynthesis; UDP-N-acetyl-alpha-D-glucosamine biosynthesis; UDP-N-acetyl-alpha-D-glucosamine from N-acetyl-alpha-D-glucosamine 1-phosphate: step 1/1. It participates in bacterial outer membrane biogenesis; LPS lipid A biosynthesis. Its function is as follows. Catalyzes the last two sequential reactions in the de novo biosynthetic pathway for UDP-N-acetylglucosamine (UDP-GlcNAc). The C-terminal domain catalyzes the transfer of acetyl group from acetyl coenzyme A to glucosamine-1-phosphate (GlcN-1-P) to produce N-acetylglucosamine-1-phosphate (GlcNAc-1-P), which is converted into UDP-GlcNAc by the transfer of uridine 5-monophosphate (from uridine 5-triphosphate), a reaction catalyzed by the N-terminal domain. The sequence is that of Bifunctional protein GlmU from Rubrobacter xylanophilus (strain DSM 9941 / JCM 11954 / NBRC 16129 / PRD-1).